We begin with the raw amino-acid sequence, 431 residues long: Tol-Pal system protein TolB (431 aa).

An N-terminal signal peptide occupies residues 1–24 (MMKFLTRMLSAFAVLFFAISTAQA). Residues 318–340 (QVYRMSSSGGAASPVGGRGSAQI) form a disordered region. Residues 323–332 (SSSGGAASPV) show a composition bias toward low complexity.

It belongs to the TolB family. In terms of assembly, the Tol-Pal system is composed of five core proteins: the inner membrane proteins TolA, TolQ and TolR, the periplasmic protein TolB and the outer membrane protein Pal. They form a network linking the inner and outer membranes and the peptidoglycan layer.

It is found in the periplasm. Functionally, part of the Tol-Pal system, which plays a role in outer membrane invagination during cell division and is important for maintaining outer membrane integrity. This Mannheimia succiniciproducens (strain KCTC 0769BP / MBEL55E) protein is Tol-Pal system protein TolB.